A 1055-amino-acid chain; its full sequence is cAMP and cAMP-inhibited cGMP 3',5'-cyclic phosphodiesterase 10A (1055 aa).

3 disordered regions span residues Met-1–Gly-90, Ala-151–Arg-193, and Leu-205–Gly-250. 2 stretches are compositionally biased toward gly residues: residues Gly-79 to Gly-90 and Ala-154 to Gln-168. Positions Pro-220 to Pro-231 are enriched in low complexity. The span at Gly-232–Gln-243 shows a compositional bias: gly residues. Position 282 is a phosphothreonine (Thr-282). 2 GAF domains span residues Asp-367–Ile-510 and Ala-542–Leu-688. 3',5'-cyclic AMP is bound by residues Arg-562–Cys-563, Ile-606–Ala-607, Thr-640, Gln-659, and His-791. One can recognise a PDEase domain in the interval Thr-718 to Glu-1035. His-791 functions as the Proton donor in the catalytic mechanism. Residue His-791 coordinates 3',5'-cyclic GMP. His-795, His-829, Asp-830, and Asp-940 together coordinate a divalent metal cation. A 3',5'-cyclic AMP-binding site is contributed by Gln-992. Gln-992 serves as a coordination point for 3',5'-cyclic GMP.

The protein belongs to the cyclic nucleotide phosphodiesterase family. Homodimer. Requires a divalent metal cation as cofactor. Post-translationally, phosphorylated on Thr-16. As to expression, abundant in the putamen and caudate nucleus regions of brain and testis, moderately expressed in the thyroid gland, pituitary gland, thalamus and cerebellum.

It localises to the cytoplasm. Its subcellular location is the cytosol. The enzyme catalyses a nucleoside 3',5'-cyclic phosphate + H2O = a nucleoside 5'-phosphate + H(+). The catalysed reaction is 3',5'-cyclic AMP + H2O = AMP + H(+). It catalyses the reaction 3',5'-cyclic GMP + H2O = GMP + H(+). It functions in the pathway purine metabolism; 3',5'-cyclic AMP degradation; AMP from 3',5'-cyclic AMP: step 1/1. Its pathway is purine metabolism; 3',5'-cyclic GMP degradation; GMP from 3',5'-cyclic GMP: step 1/1. Inhibited by dipyridamole and moderately by IBMX. cGMP acts as an allosteric activator. Plays a role in signal transduction by regulating the intracellular concentration of cyclic nucleotides. Can hydrolyze both cAMP and cGMP, but has higher affinity for cAMP and is more efficient with cAMP as substrate. May play a critical role in regulating cAMP and cGMP levels in the striatum, a region of the brain that contributes to the control of movement and cognition. The chain is cAMP and cAMP-inhibited cGMP 3',5'-cyclic phosphodiesterase 10A (PDE10A) from Homo sapiens (Human).